The primary structure comprises 999 residues: Sarcoplasmic/endoplasmic reticulum calcium ATPase 3 (999 aa).

Over 1 to 48 (MEAAHSVPVQDVLSRFGVAESCGLSPEQVRRNREKYGPNELPAEERKS) the chain is Cytoplasmic. Residues 49-69 (LWELVLEQFEDLLVRILLMAA) form a helical membrane-spanning segment. The Lumenal portion of the chain corresponds to 70 to 89 (FLSFILAWFEEGEESTTAFV). A helical membrane pass occupies residues 90–110 (EPIVIIMILIANAVVGVWQER). Residues 111-253 (NAESAIEALK…PEKTPLQQKL (143 aa)) lie on the Cytoplasmic side of the membrane. Residues 254-273 (DEFSQQLSKVIFLVCIAVWV) traverse the membrane as a helical segment. At 274–295 (INISHFSDPVHGGSWFRGAIYY) the chain is on the lumenal side. The chain crosses the membrane as a helical span at residues 296-313 (FKTSVALAVAAIPEGLPA). Ca(2+) contacts are provided by Val304, Ala305, Ile307, and Glu309. At 314-757 (VITTCLALGT…EEGRAIYNNM (444 aa)) the chain is on the cytoplasmic side. Catalysis depends on Asp351, which acts as the 4-aspartylphosphate intermediate. Mg(2+) contacts are provided by Asp351 and Thr353. Residue Thr353 coordinates ATP. The interval 370 to 400 (EKVEGTQCSLHEFSITGSTYAPEGQILKDEK) is interaction with phospholamban 1. ATP contacts are provided by Glu442, Arg489, Lys515, Arg560, Thr625, Gly626, Asp627, Arg678, and Lys684. Asp703 is a Mg(2+) binding site. Residue Asn706 participates in ATP binding. Residues 758–777 (KQFIRYLISSNVGEVVCIFL) traverse the membrane as a helical segment. Ca(2+)-binding residues include Asn768 and Glu771. Over 778–787 (TAILGLPEAL) the chain is Lumenal. Residues 788-808 (IPVQLLWVNLVTDGLPATALG) traverse the membrane as a helical segment. Residues 788–808 (IPVQLLWVNLVTDGLPATALG) are interaction with phospholamban 2. Ca(2+) is bound by residues Asn796, Thr799, and Asp800. The Cytoplasmic portion of the chain corresponds to 809-828 (FNPPDLDIMDKLPRNPKEPL). Residues 829 to 851 (ISGWLFFRYLAIGVYVGLATVGA) form a helical membrane-spanning segment. The Lumenal portion of the chain corresponds to 852 to 897 (ATWWFLYDAEGPQVSFHQLRNFMRCTEDNPIFEGVNCEIFESRYPT). Residues 898–917 (TMALSVLVTIEMCNALNSVS) form a helical membrane-spanning segment. Glu908 lines the Ca(2+) pocket. Residues 918–930 (ENQSLLRMPPWLN) are Cytoplasmic-facing. The chain crosses the membrane as a helical span at residues 931-949 (IWLLGAIVMSMALHFFILY). Topologically, residues 950-964 (VKPMPLIFQVTPLSW) are lumenal. The chain crosses the membrane as a helical span at residues 965 to 985 (PQWVVVLKISLPVILLDEGLK). Residues 986 to 999 (YLSRNHLEGEEDKK) lie on the Cytoplasmic side of the membrane.

This sequence belongs to the cation transport ATPase (P-type) (TC 3.A.3) family. Type IIA subfamily. In terms of assembly, interacts with sarcolipin (SLN). Interacts with phospholamban (PLN). Interacts with myoregulin (MRLN). Interacts with DWORF. Mg(2+) is required as a cofactor. In terms of tissue distribution, found in spleen, lung, intestine and brain.

It is found in the endoplasmic reticulum membrane. Its subcellular location is the sarcoplasmic reticulum membrane. It catalyses the reaction Ca(2+)(in) + ATP + H2O = Ca(2+)(out) + ADP + phosphate + H(+). With respect to regulation, inhibited by sarcolipin (SLN), phospholamban (PLN) and myoregulin (MRLN). Enhanced by DWORF; DWORF increases activity by displacing sarcolipin (SLN), phospholamban (PLN) and myoregulin (MRLN). Its function is as follows. This magnesium-dependent enzyme catalyzes the hydrolysis of ATP coupled with the transport of calcium. Transports calcium ions from the cytosol into the sarcoplasmic/endoplasmic reticulum lumen. Contributes to calcium sequestration involved in muscular excitation/contraction. The protein is Sarcoplasmic/endoplasmic reticulum calcium ATPase 3 (ATP2A3) of Gallus gallus (Chicken).